A 203-amino-acid chain; its full sequence is ATP-dependent Clp protease proteolytic subunit (203 aa).

Serine 103 acts as the Nucleophile in catalysis. Residue histidine 128 is part of the active site.

This sequence belongs to the peptidase S14 family. As to quaternary structure, fourteen ClpP subunits assemble into 2 heptameric rings which stack back to back to give a disk-like structure with a central cavity, resembling the structure of eukaryotic proteasomes.

Its subcellular location is the cytoplasm. It catalyses the reaction Hydrolysis of proteins to small peptides in the presence of ATP and magnesium. alpha-casein is the usual test substrate. In the absence of ATP, only oligopeptides shorter than five residues are hydrolyzed (such as succinyl-Leu-Tyr-|-NHMec, and Leu-Tyr-Leu-|-Tyr-Trp, in which cleavage of the -Tyr-|-Leu- and -Tyr-|-Trp bonds also occurs).. In terms of biological role, cleaves peptides in various proteins in a process that requires ATP hydrolysis. Has a chymotrypsin-like activity. Plays a major role in the degradation of misfolded proteins. This is ATP-dependent Clp protease proteolytic subunit from Nitrosococcus oceani (strain ATCC 19707 / BCRC 17464 / JCM 30415 / NCIMB 11848 / C-107).